A 338-amino-acid polypeptide reads, in one-letter code: Phenylalanine--tRNA ligase alpha subunit (338 aa).

Glutamate 252 is a binding site for Mg(2+).

Belongs to the class-II aminoacyl-tRNA synthetase family. Phe-tRNA synthetase alpha subunit type 1 subfamily. In terms of assembly, tetramer of two alpha and two beta subunits. Mg(2+) is required as a cofactor.

The protein resides in the cytoplasm. It catalyses the reaction tRNA(Phe) + L-phenylalanine + ATP = L-phenylalanyl-tRNA(Phe) + AMP + diphosphate + H(+). The sequence is that of Phenylalanine--tRNA ligase alpha subunit (pheS) from Aquifex aeolicus (strain VF5).